Reading from the N-terminus, the 1414-residue chain is DNA-directed RNA polymerase subunit beta'' (1414 aa).

4 residues coordinate Zn(2+): cysteine 220, cysteine 293, cysteine 300, and cysteine 303.

The protein belongs to the RNA polymerase beta' chain family. RpoC2 subfamily. In plastids the minimal PEP RNA polymerase catalytic core is composed of four subunits: alpha, beta, beta', and beta''. When a (nuclear-encoded) sigma factor is associated with the core the holoenzyme is formed, which can initiate transcription. It depends on Zn(2+) as a cofactor.

The protein resides in the plastid. The protein localises to the chloroplast. It carries out the reaction RNA(n) + a ribonucleoside 5'-triphosphate = RNA(n+1) + diphosphate. DNA-dependent RNA polymerase catalyzes the transcription of DNA into RNA using the four ribonucleoside triphosphates as substrates. The protein is DNA-directed RNA polymerase subunit beta'' of Angiopteris evecta (Mule's foot fern).